A 150-amino-acid polypeptide reads, in one-letter code: Endoribonuclease YbeY (150 aa).

Zn(2+)-binding residues include histidine 116, histidine 120, and histidine 126.

This sequence belongs to the endoribonuclease YbeY family. Zn(2+) serves as cofactor.

The protein localises to the cytoplasm. Single strand-specific metallo-endoribonuclease involved in late-stage 70S ribosome quality control and in maturation of the 3' terminus of the 16S rRNA. The polypeptide is Endoribonuclease YbeY (Mesomycoplasma hyopneumoniae (strain 232) (Mycoplasma hyopneumoniae)).